We begin with the raw amino-acid sequence, 262 residues long: Transcription factor bHLH81 (262 aa).

A disordered region spans residues 1–29; the sequence is MQPTSVGSSGGGDDGGGRGGGGGLSRSGL. Gly residues predominate over residues 8–25; sequence SSGGGDDGGGRGGGGGLS. The 51-residue stretch at 190–240 folds into the bHLH domain; that stretch reads CATHPRSIAERVRRTRISDRIRKLQELVPNMDKQTNTADMLEEAVEYVKVL.

Homodimer. In terms of tissue distribution, expressed in flowers.

The protein localises to the nucleus. In Arabidopsis thaliana (Mouse-ear cress), this protein is Transcription factor bHLH81 (BHLH81).